A 74-amino-acid polypeptide reads, in one-letter code: Anionic peptide clone 9 (74 aa).

A signal peptide spans 1–24 (MVSKSLIVLLLVSVLVSTFFTTEA).

Belongs to the non-disulfide-bridged peptide (NDBP) superfamily. Long chain multifunctional peptide (group 2) family. In terms of tissue distribution, expressed by the venom gland.

The protein resides in the secreted. Functionally, may be an antimicrobial peptide. This is Anionic peptide clone 9 from Tityus costatus (Brazilian scorpion).